The chain runs to 382 residues: GDP-mannose transporter 1 (382 aa).

Over 1–40 (MADDKKTNEYTVEMDKLDHGNKNFEAPAPAVRPRGPPAAQ) the chain is Cytoplasmic. The helical transmembrane segment at 41 to 61 (LANNPILPVLAYCGSSILMTV) threads the bilayer. The Lumenal portion of the chain corresponds to 62–71 (MNKYVLSGTD). Residues 72 to 92 (FNLNFFLLCVQSIVCIVAIQT) traverse the membrane as a helical segment. Residues 93–110 (CKSSKLITYRDFNSDEAK) are Cytoplasmic-facing. A helical transmembrane segment spans residues 111–127 (KWFPITLLLIGMIYTGS). Topologically, residues 128–134 (KALQYLS) are lumenal. Residues 135–151 (IPVYTIFKNLTIILIAY) form a helical membrane-spanning segment. At 152 to 160 (GEVLWFGGS) the chain is on the cytoplasmic side. The helical transmembrane segment at 161–182 (VTGMTLFSFGLMVLSSIIAAWA) threads the bilayer. Over 183–200 (DIKHAVESSGDATAKVST) the chain is Lumenal. The chain crosses the membrane as a helical span at residues 201-221 (LNAGYIWMLINCLCTSSYVLG). Over 222–233 (MRKRIKLTNFKD) the chain is Cytoplasmic. The chain crosses the membrane as a helical span at residues 234-254 (FDTMFYNNLLSIPVLLVLTFL). Residues 255 to 274 (MEDWSSANIARNFPPADRNG) are Lumenal-facing. Residues 275-295 (ILFAMILSGLSSVFISYTSAW) traverse the membrane as a helical segment. Residues 296–303 (CVRVTSST) are Cytoplasmic-facing. The helical transmembrane segment at 304–324 (TYSMVGALNKLPIALSGLIFF) threads the bilayer. At 325–327 (DAP) the chain is on the lumenal side. The helical transmembrane segment at 328–348 (VTFPSVSAIVVGFISGIVYAV) threads the bilayer. Residues 349–382 (AKIKQSAKPKTGVLPMSNPPVSASSQSMRDSLRS) lie on the Cytoplasmic side of the membrane. Residues 358–382 (KTGVLPMSNPPVSASSQSMRDSLRS) are disordered. Positions 367 to 382 (PPVSASSQSMRDSLRS) are enriched in polar residues.

Belongs to the TPT transporter family. SLC35D subfamily. As to quaternary structure, homooligomer.

It localises to the golgi apparatus membrane. Its subcellular location is the cytoplasmic vesicle membrane. It is found in the endoplasmic reticulum membrane. Its function is as follows. Involved in the import of GDP-mannose from the cytoplasm into the Golgi lumen. This chain is GDP-mannose transporter 1 (gmt1), found in Neosartorya fischeri (strain ATCC 1020 / DSM 3700 / CBS 544.65 / FGSC A1164 / JCM 1740 / NRRL 181 / WB 181) (Aspergillus fischerianus).